We begin with the raw amino-acid sequence, 435 residues long: Beta-arrestin arr-1 (435 aa).

A disordered region spans residues 358–382; sequence LTHSKPPESPERTDRGLPSIEATNG. Residues 362 to 372 show a composition bias toward basic and acidic residues; that stretch reads KPPESPERTDR. Positions 390 to 394 match the Clathrin box motif; that stretch reads LIQLH. The [DE]-X(1,2)-F-X-X-[FL]-X-X-X-R motif signature appears at 404–414; it reads DLIFEDFARMR. The tract at residues 416–435 is disordered; that stretch reads HGNDSEDQPSPSANLPPSLL. The span at 424–435 shows a compositional bias: low complexity; it reads PSPSANLPPSLL.

It belongs to the arrestin family. In terms of assembly, component of a complex composed of arr-1, daf-18 and mpz-1. Within the complex, interacts (via C-terminus) with mpz-1 (via PDZ domain) and phosphatase daf-18. May interact (via C-terminus) with clathrin chc-1 and beta-2 adaptin (AP2) apb-1. As to expression, expressed in head neurons, nerve ring and ventral nerve cord (at protein level). Expressed in the nervous system including the nerve ring and the ventral and dorsal nerve cords. Highly expressed in amphid chemosensory neurons AWA, AWB, AWC, ADL and ASH, and in hermaphrodite specific neuron HSN. Also expressed in the intestine.

It is found in the perikaryon. Its subcellular location is the cell projection. The protein resides in the dendrite. Its function is as follows. Adapter protein required for olfactory adaptation and recovery to volatile odorants, probably by desensitization of G-protein coupled receptors (GPCR). May play a role in clathrin-mediated GPCR endocytosis. Acts as a positive regulator of insulin-like daf-2 signaling pathway probably by forming a complex with mpz-1 and phosphatase daf-18 likely resulting in daf-18 inhibition. Involved in egg-laying. This is Beta-arrestin arr-1 from Caenorhabditis elegans.